The following is a 37-amino-acid chain: Large ribosomal subunit protein bL36 (37 aa).

Belongs to the bacterial ribosomal protein bL36 family.

The protein is Large ribosomal subunit protein bL36 (rpmJ) of Mycoplasma sp.